Consider the following 192-residue polypeptide: Imidazoleglycerol-phosphate dehydratase (192 aa).

The protein belongs to the imidazoleglycerol-phosphate dehydratase family.

It localises to the cytoplasm. It catalyses the reaction D-erythro-1-(imidazol-4-yl)glycerol 3-phosphate = 3-(imidazol-4-yl)-2-oxopropyl phosphate + H2O. The protein operates within amino-acid biosynthesis; L-histidine biosynthesis; L-histidine from 5-phospho-alpha-D-ribose 1-diphosphate: step 6/9. The protein is Imidazoleglycerol-phosphate dehydratase of Carboxydothermus hydrogenoformans (strain ATCC BAA-161 / DSM 6008 / Z-2901).